Consider the following 237-residue polypeptide: Phosphoribosylaminoimidazole-succinocarboxamide synthase (237 aa).

It belongs to the SAICAR synthetase family.

The enzyme catalyses 5-amino-1-(5-phospho-D-ribosyl)imidazole-4-carboxylate + L-aspartate + ATP = (2S)-2-[5-amino-1-(5-phospho-beta-D-ribosyl)imidazole-4-carboxamido]succinate + ADP + phosphate + 2 H(+). Its pathway is purine metabolism; IMP biosynthesis via de novo pathway; 5-amino-1-(5-phospho-D-ribosyl)imidazole-4-carboxamide from 5-amino-1-(5-phospho-D-ribosyl)imidazole-4-carboxylate: step 1/2. The protein is Phosphoribosylaminoimidazole-succinocarboxamide synthase of Citrobacter koseri (strain ATCC BAA-895 / CDC 4225-83 / SGSC4696).